Consider the following 356-residue polypeptide: MRSLLLLVLISVCWADHHLSDSYTPPDQDRVIHIQAENGPRLLVEAEQAKVFSHRGGNVTLPCKFYRDPTAFGSGIHKIRIKWTKLTSDYLREVDVFVSMGYHKKTYGGYQGRVFLKGGSDNDASLVITDLTLEDYGRYKCEVIEGLEDDTAVVALELQGVVFPYFPRLGRYNLNFHEARQACLDQDAVIASFDQLYDAWRGGLDWCNAGWLSDGSVQYPITKPREPCGGQNTVPGVRNYGFWDKDKSRYDVFCFTSNFNGRFYYLIHPTKLTYDEAVQACLNDGAQIAKVGQIFAAWKLLGYDRCDAGWLADGSVRYPISRPRRRCSPTEAAVRFVGFPDKKHKLYGVYCFRAYN.

A propeptide spanning residues 1-9 (MRSLLLLVL) is cleaved from the precursor. An Ig-like V-type domain is found at 40–154 (PRLLVEAEQA…EGLEDDTAVV (115 aa)). Residue Asn-58 is glycosylated (N-linked (GlcNAc...) asparagine). 5 disulfides stabilise this stretch: Cys-63–Cys-141, Cys-183–Cys-254, Cys-207–Cys-228, Cys-281–Cys-351, and Cys-306–Cys-327. 2 consecutive Link domains span residues 161-256 (VVFP…FCFT) and 261-353 (GRFY…YCFR).

Belongs to the HAPLN family. In terms of tissue distribution, ubiquitously expressed.

Its subcellular location is the secreted. The protein localises to the extracellular space. The protein resides in the extracellular matrix. In terms of biological role, stabilizes the aggregates of proteoglycan monomers with hyaluronic acid in the extracellular cartilage matrix. This chain is Hyaluronan and proteoglycan link protein 1 (Hapln1), found in Mus musculus (Mouse).